Consider the following 78-residue polypeptide: Protein Class8-like (78 aa).

The N-terminal stretch at 1 to 19 is a signal peptide; it reads MRTLVVLLIGAVLLCSANA. Positions 20-36 are excised as a propeptide; sequence FLDELLAESVNDMTDKR. The ShKT domain maps to 38-78; the sequence is CFDKYKSNICGGVISPAHCVRRSGRMAKFAKENCAHFCGFC. Disulfide bonds link cysteine 38–cysteine 78, cysteine 47–cysteine 71, and cysteine 56–cysteine 75.

In terms of tissue distribution, expressed in ganglion neurons residing in the mesoglea (observed in both planulae and primary polyps). Not expressed in nematocytes.

Its function is as follows. Probable neuropeptide. The protein is Protein Class8-like of Nematostella vectensis (Starlet sea anemone).